The following is a 1361-amino-acid chain: DNA-directed RNA polymerase subunit beta (1361 aa).

This sequence belongs to the RNA polymerase beta chain family. In terms of assembly, the RNAP catalytic core consists of 2 alpha, 1 beta, 1 beta' and 1 omega subunit. When a sigma factor is associated with the core the holoenzyme is formed, which can initiate transcription.

The catalysed reaction is RNA(n) + a ribonucleoside 5'-triphosphate = RNA(n+1) + diphosphate. In terms of biological role, DNA-dependent RNA polymerase catalyzes the transcription of DNA into RNA using the four ribonucleoside triphosphates as substrates. This Dichelobacter nodosus (strain VCS1703A) protein is DNA-directed RNA polymerase subunit beta.